A 376-amino-acid chain; its full sequence is Erythronate-4-phosphate dehydrogenase (376 aa).

Substrate is bound by residues serine 45 and threonine 66. Residues 126–127 (QV), aspartate 146, threonine 174, 201–203 (ASR), and aspartate 227 contribute to the NAD(+) site. Residue arginine 203 is part of the active site. The active site involves glutamate 232. The active-site Proton donor is histidine 249. Glycine 252 provides a ligand contact to NAD(+). Tyrosine 253 is a binding site for substrate.

It belongs to the D-isomer specific 2-hydroxyacid dehydrogenase family. PdxB subfamily. In terms of assembly, homodimer.

It localises to the cytoplasm. It carries out the reaction 4-phospho-D-erythronate + NAD(+) = (R)-3-hydroxy-2-oxo-4-phosphooxybutanoate + NADH + H(+). The protein operates within cofactor biosynthesis; pyridoxine 5'-phosphate biosynthesis; pyridoxine 5'-phosphate from D-erythrose 4-phosphate: step 2/5. Catalyzes the oxidation of erythronate-4-phosphate to 3-hydroxy-2-oxo-4-phosphonooxybutanoate. The protein is Erythronate-4-phosphate dehydrogenase of Ectopseudomonas mendocina (strain ymp) (Pseudomonas mendocina).